The chain runs to 187 residues: 5-formyltetrahydrofolate cyclo-ligase (187 aa).

ATP contacts are provided by residues 6-10 (RQQIR), 139-146 (GMGGGFYD), and Asp178.

Belongs to the 5-formyltetrahydrofolate cyclo-ligase family.

It carries out the reaction (6S)-5-formyl-5,6,7,8-tetrahydrofolate + ATP = (6R)-5,10-methenyltetrahydrofolate + ADP + phosphate. The protein operates within one-carbon metabolism; tetrahydrofolate interconversion. Involved in the removal of 5-formyltetrahydrofolate. In vitro, it is a potent inhibitor of various folate-dependent enzymes in the C1 metabolism network and in vivo it might function as a folate storage. 5-formyltetrahydrofolate is also used as an antifolate rescue agent in cancer chemotherapy. Catalyzes the irreversible ATP-dependent transformation of 5-formyltetrahydrofolate (5-CHO-THF) to form 5,10-methenyltetrahydrofolate (5,10-CH=THF). The reverse reaction is catalyzed by the serine hydroxymethyltransferase GlyA (SHMT). The polypeptide is 5-formyltetrahydrofolate cyclo-ligase (Haemophilus influenzae (strain ATCC 51907 / DSM 11121 / KW20 / Rd)).